A 785-amino-acid polypeptide reads, in one-letter code: Disintegrin and metalloproteinase domain-containing protein B (785 aa).

A signal peptide spans 1-26; the sequence is MRFLKSALPFVASALSLLSVQAAARS. The Extracellular portion of the chain corresponds to 27–703; it reads QEPSAIQHVS…GSWVEQHKNL (677 aa). Residues 279–507 form the Peptidase M12B domain; that stretch reads KQVALVGIAA…NSVKSSCLSD (229 aa). Asn322, Asn329, and Asn355 each carry an N-linked (GlcNAc...) asparagine glycan. 2 cysteine pairs are disulfide-bonded: Cys398–Cys492 and Cys446–Cys464. Zn(2+) is bound at residue His429. The active site involves Glu430. The Zn(2+) site is built by His433 and His439. Positions 516-605 constitute a Disintegrin domain; it reads GSQCGNGIVE…TCPADSFKKD (90 aa). Asn561, Asn593, and Asn640 each carry an N-linked (GlcNAc...) asparagine glycan. The cysteines at positions 577 and 597 are disulfide-linked. Residues 704–724 form a helical membrane-spanning segment; it reads VIGVACGVGGLLVLSILWCMI. Topologically, residues 725–785 are cytoplasmic; the sequence is NRCRRARTVV…GPYQSATRYA (61 aa). Residues 737–785 are disordered; it reads PPMRPWPGPMPPPPPQMGQWAGPNRGYQGLRAEPPPPYPGPYQSATRYA. Positions 739-752 are enriched in pro residues; that stretch reads MRPWPGPMPPPPPQ.

Requires Zn(2+) as cofactor.

Its subcellular location is the membrane. Probable zinc protease. The sequence is that of Disintegrin and metalloproteinase domain-containing protein B (ADM-B) from Aspergillus fumigatus (strain ATCC MYA-4609 / CBS 101355 / FGSC A1100 / Af293) (Neosartorya fumigata).